A 793-amino-acid polypeptide reads, in one-letter code: Nuclear cap-binding protein subunit 1 (793 aa).

An MIF4G domain is found at 28-242 (EKKLQEVIGK…SLSAQIENLR (215 aa)).

It belongs to the NCBP1 family. As to quaternary structure, component of the nuclear cap-binding complex (CBC), a heterodimer composed of ncbp-1 and ncbp-1 that interacts with m7GpppG-capped RNA.

It is found in the nucleus. Functionally, component of the cap-binding complex (CBC), which binds cotranscriptionally to the 5'-cap of pre-mRNAs and is involved in various processes such as pre-mRNA splicing and RNA-mediated gene silencing (RNAi). The CBC complex is involved in miRNA-mediated RNA interference and is required for primary microRNAs (miRNAs) processing. In the CBC complex, ncbp-1 does not bind directly capped RNAs (m7GpppG-capped RNA) but is required to stabilize the movement of the N-terminal loop of ncbp-2 and lock the CBC into a high affinity cap-binding state with the cap structure. The protein is Nuclear cap-binding protein subunit 1 (ncbp-1) of Caenorhabditis briggsae.